The primary structure comprises 267 residues: 4-hydroxy-tetrahydrodipicolinate reductase (267 aa).

NAD(+) is bound by residues 9–14 and D35; that span reads GAAGRM. R36 lines the NADP(+) pocket. NAD(+)-binding positions include 99-101 and 123-126; these read GTT and APNY. Catalysis depends on H156, which acts as the Proton donor/acceptor. A (S)-2,3,4,5-tetrahydrodipicolinate-binding site is contributed by H157. The active-site Proton donor is K160. Residue 166–167 participates in (S)-2,3,4,5-tetrahydrodipicolinate binding; sequence GT.

This sequence belongs to the DapB family.

The protein localises to the cytoplasm. The catalysed reaction is (S)-2,3,4,5-tetrahydrodipicolinate + NAD(+) + H2O = (2S,4S)-4-hydroxy-2,3,4,5-tetrahydrodipicolinate + NADH + H(+). It carries out the reaction (S)-2,3,4,5-tetrahydrodipicolinate + NADP(+) + H2O = (2S,4S)-4-hydroxy-2,3,4,5-tetrahydrodipicolinate + NADPH + H(+). It functions in the pathway amino-acid biosynthesis; L-lysine biosynthesis via DAP pathway; (S)-tetrahydrodipicolinate from L-aspartate: step 4/4. In terms of biological role, catalyzes the conversion of 4-hydroxy-tetrahydrodipicolinate (HTPA) to tetrahydrodipicolinate. The protein is 4-hydroxy-tetrahydrodipicolinate reductase of Alkalilimnicola ehrlichii (strain ATCC BAA-1101 / DSM 17681 / MLHE-1).